A 1179-amino-acid polypeptide reads, in one-letter code: Integrin alpha-1 (1179 aa).

A signal peptide spans 1 to 28; that stretch reads MAPRPRARPGVAVACCWLLTVVLRCCVS. The Extracellular portion of the chain corresponds to 29-1141; sequence FNVDVKNSMT…SKDGLPGRVP (1113 aa). The FG-GAP 1 repeat unit spans residues 30–91; that stretch reads NVDVKNSMTF…CPVGRGESLP (62 aa). The N-linked (GlcNAc...) asparagine glycan is linked to N74. C82 and C92 form a disulfide bridge. N100, N105, N112, N217, N317, N341, N402, N418, and N460 each carry an N-linked (GlcNAc...) asparagine glycan. The FG-GAP 2 repeat unit spans residues 101-160; it reads TSIPNVTEVKENMTFGSTLVTNPNGGFLACGPLYAYRCGHLHYTTGICSDVSPTFQVVNS. In terms of domain architecture, VWFA spans 161–360; the sequence is IAPVQECSTQ…IVKTLGERIF (200 aa). An FG-GAP 3 repeat occupies 365–417; the sequence is TADQSAASFEMEMSQTGFSAHYSQDWVMLGAVGAYDWNGTVVMQKASQIIIPR. FG-GAP repeat units lie at residues 422-475, 476-538, 557-615, and 619-679; these read NVES…DGNI, KILQ…RFEY, SCTT…TIRK, and QRIP…FEPN. D498, D500, D502, and D506 together coordinate Ca(2+). A glycan (N-linked (GlcNAc...) asparagine) is linked at N532. Ca(2+)-binding residues include D580, N582, D584, D588, D642, N644, D646, and D650. C688 and C697 are disulfide-bonded. N699, N748, and N780 each carry an N-linked (GlcNAc...) asparagine glycan. C703 and C756 are oxidised to a cystine. A disulfide bridge connects residues C808 and C814. Residues N840, N883, N908, N915, N939, N966, N974, and N1008 are each glycosylated (N-linked (GlcNAc...) asparagine). A disulfide bridge links C878 with C886. Disulfide bonds link C1030/C1062 and C1065/C1072. N-linked (GlcNAc...) asparagine glycosylation is found at N1073, N1083, N1102, and N1113. A helical membrane pass occupies residues 1142–1164; that stretch reads LWVILLSAFAGLLLLMLLILALW. At 1165-1179 the chain is on the cytoplasmic side; sequence KIGFFKRPLKKKMEK. A GFFKR motif motif is present at residues 1167-1171; sequence GFFKR.

Belongs to the integrin alpha chain family. As to quaternary structure, heterodimer of an alpha and a beta subunit. Alpha-1 associates with beta-1. Interacts with RAB21. Interacts (via cytoplasmic domain) with PTPN2; activates PTPN2 phosphatase activity towards EGFR and negatively regulates EGF signaling.

The protein resides in the membrane. Its function is as follows. Integrin alpha-1/beta-1 is a receptor for laminin and collagen. It recognizes the proline-hydroxylated sequence G-F-P-G-E-R in collagen. Involved in anchorage-dependent, negative regulation of EGF-stimulated cell growth. This is Integrin alpha-1 (ITGA1) from Homo sapiens (Human).